The chain runs to 458 residues: Photosystem II CP43 reaction center protein (458 aa).

The next 5 helical transmembrane spans lie at 54 to 78 (LFEV…PHLA), 119 to 140 (LRGP…KDKN), 163 to 185 (KAMF…RVIT), 240 to 260 (RPFN…LSYS), and 276 to 297 (WFNN…ASQA). Residue E352 coordinates [CaMn4O5] cluster. Residues 432–456 (RARAAAAGFEKGIDRKTEPVLSMSD) form a helical membrane-spanning segment.

The protein belongs to the PsbB/PsbC family. PsbC subfamily. As to quaternary structure, PSII is composed of 1 copy each of membrane proteins PsbA, PsbB, PsbC, PsbD, PsbE, PsbF, PsbH, PsbI, PsbJ, PsbK, PsbL, PsbM, PsbT, PsbX, PsbY, PsbZ, Psb30/Ycf12, peripheral proteins PsbO, CyanoQ (PsbQ), PsbU, PsbV and a large number of cofactors. It forms dimeric complexes. Binds multiple chlorophylls and provides some of the ligands for the Ca-4Mn-5O cluster of the oxygen-evolving complex. It may also provide a ligand for a Cl- that is required for oxygen evolution. PSII binds additional chlorophylls, carotenoids and specific lipids. is required as a cofactor.

The protein localises to the cellular thylakoid membrane. Its function is as follows. One of the components of the core complex of photosystem II (PSII). It binds chlorophyll and helps catalyze the primary light-induced photochemical processes of PSII. PSII is a light-driven water:plastoquinone oxidoreductase, using light energy to abstract electrons from H(2)O, generating O(2) and a proton gradient subsequently used for ATP formation. The polypeptide is Photosystem II CP43 reaction center protein (Prochlorothrix hollandica).